We begin with the raw amino-acid sequence, 306 residues long: uncharacterized protein (306 aa).

Aspartate 204 acts as the Proton acceptor in catalysis.

It belongs to the aminoglycoside phosphotransferase family.

This is an uncharacterized protein from Bacillus subtilis (strain 168).